Reading from the N-terminus, the 601-residue chain is Coronin-like protein crn1 (601 aa).

5 WD repeats span residues 79–119 (GHTA…TVME), 132–172 (GHSR…AHVS), 174–213 (KMDVMCQSMSFNADGTRLVTTSRDKKVRVWDPRTDKPVSV), 220–260 (AKNP…EPIG), and 266–306 (DTGS…FHYL). Disordered stretches follow at residues 361–386 (SDIYPPAPSGKPSLTAEEWASGKDAQ) and 407–540 (SATV…VEEK). 3 stretches are compositionally biased toward basic and acidic residues: residues 419-429 (KHNEEKVETPK), 437-453 (KPKESAEEQKPSKEPEV), and 462-495 (KVEEPSKKRDEDNHQKEETVTQPKREKTPVEKSF). Ser-500 and Ser-501 each carry phosphoserine. Over residues 507-526 (EDVKKEPSEEKKLEVSDEAP) the composition is skewed to basic and acidic residues. Ser-553 carries the phosphoserine modification. Positions 556 to 600 (NLADLNKRFEGFEKRYEEELAIRDWKIAQLEDKLAKLTEAIKEKC) form a coiled coil.

Belongs to the WD repeat coronin family. Binds to F-actin.

The polypeptide is Coronin-like protein crn1 (crn1) (Schizosaccharomyces pombe (strain 972 / ATCC 24843) (Fission yeast)).